Consider the following 253-residue polypeptide: Imidazole glycerol phosphate synthase subunit HisF (253 aa).

Active-site residues include D11 and D130.

This sequence belongs to the HisA/HisF family. As to quaternary structure, heterodimer of HisH and HisF.

The protein localises to the cytoplasm. The enzyme catalyses 5-[(5-phospho-1-deoxy-D-ribulos-1-ylimino)methylamino]-1-(5-phospho-beta-D-ribosyl)imidazole-4-carboxamide + L-glutamine = D-erythro-1-(imidazol-4-yl)glycerol 3-phosphate + 5-amino-1-(5-phospho-beta-D-ribosyl)imidazole-4-carboxamide + L-glutamate + H(+). It functions in the pathway amino-acid biosynthesis; L-histidine biosynthesis; L-histidine from 5-phospho-alpha-D-ribose 1-diphosphate: step 5/9. Functionally, IGPS catalyzes the conversion of PRFAR and glutamine to IGP, AICAR and glutamate. The HisF subunit catalyzes the cyclization activity that produces IGP and AICAR from PRFAR using the ammonia provided by the HisH subunit. This is Imidazole glycerol phosphate synthase subunit HisF from Acidithiobacillus ferrooxidans (strain ATCC 23270 / DSM 14882 / CIP 104768 / NCIMB 8455) (Ferrobacillus ferrooxidans (strain ATCC 23270)).